A 252-amino-acid polypeptide reads, in one-letter code: MSAKGVAIITGAAQGIGRAIVVRLAADGFDVAVNDLPNDAQVAKLTELAEEIRATGRKAIVVPGDISQEAIVEKIVADTVEQLGGVDVMVANAGICELSPIVSTSVEQWDTTQAVNLRGVFLCFKHAGKQMLAQGRPGRLIGGGSLGGFSGLPMGSAYAASKAGMRALTHSAARELGPSGITANSYAPGIVATPLTIGNYGQEFLDSQKATCAVNDNGTPEDIAALVSFLASKESRFITGQTIMIDGGRLNI.

Isoleucine 16, aspartate 65, asparagine 92, lysine 125, tyrosine 158, lysine 162, valine 191, and threonine 193 together coordinate NADP(+). Tyrosine 158 acts as the Proton acceptor in catalysis. Catalysis depends on tyrosine 158, which acts as the Proton donor. Lysine 162 serves as the catalytic Lowers pKa of active site Tyr.

It belongs to the short-chain dehydrogenases/reductases (SDR) family.

It catalyses the reaction cyathadiol + reduced [NADPH--hemoprotein reductase] + O2 = cyathatriol + oxidized [NADPH--hemoprotein reductase] + H2O + H(+). The catalysed reaction is 11-O-acetylcyathatriol + A = 11-O-acetylcyathin A3 + AH2. The enzyme catalyses cyathatriol + A = cyathin A3 + AH2. The protein operates within secondary metabolite biosynthesis. Functionally, short-chain dehydrogenase/reductase; part of the gene cluster that mediates the biosynthesis of erinacines, cyathane-xylosides that show unique biological activities, including leishmanicidal activity, stimulating activity for nerve growth-factor synthesis, and agonistic activity toward the kappa opioid receptor. Within the pathway, eriH works with eriA to catalyze C-11 hydroxylation of cyathadiol to produce cyathatriol. EriH also catalyzes oxidation of 11-O-acetyl-cyathatriol into 1-O-acetylcyathin A3. In the absence of eriL and eriJ, the SDR eriH is able to convert cyathatriol to cyathin A3; this is likely a switching mechanism in the biosynthesis of cyathins (C-14 ketogroup)and erinacines (C-14 glycosylated group). The first step of the erinacines biosynthesis pathway is catalyzed by the geranylgeranyl diphosphate (GGPP) synthase eriE via conversion of farnesyl pyrophosphate and isopentyl pyrophosphate into geranylgeranyl pyrophosphate (GGPP). GGPP is then substrate of the diterpene cyclase eriG for the production of cyatha-3,12-diene. The cytochrome P450 monooxygenase eriI then hydroxylates cyatha-3,12-diene at C-14 of the seven-membered ring to produce erinacol, which is further hydroxylated at C-15 by the cytochrome P450 monooxygenase eriC to yield cyathadiol. The cytochrome P450 monooxygenase eriA then catalyzes C-11 hydroxylation in the presence of the short chain dehydrogenase/reductase (SDR) eriH, which leads to the production of cyathatriol. The acetyltransferase eriL converts cyathatriol into 11-O-acetyl-cyathatriol. The SDR eriH catalyzes further oxidation of 11-O-acetyl-cyathatriol into 1-O-acetylcyathin A3. Finally, the glycosyl transferase eriJ tranfers xylose from UDP-xylose onto C-14 of 11-O-acetyl-cyathatriol to form eracine Q. EriJ is also able to convert 11-O-acetyl-cyathatriol to eracine Q2 by using UDP-D-glucose as cosubstrate, but at a lower rate. This Hericium erinaceus (Lion's mane mushroom) protein is Short-chain dehydrogenase/reductase eriH.